The sequence spans 85 residues: Small integral membrane protein 35 (85 aa).

The chain crosses the membrane as a helical span at residues 7–27 (ISTLGMILGVGLSLLLVSILG).

The protein localises to the membrane. This Mus musculus (Mouse) protein is Small integral membrane protein 35.